The primary structure comprises 427 residues: Amino acid transporter AVT3A (427 aa).

Residues 1–35 are disordered; sequence MRYDQEAGSSSHSLPSGSSSHSLPPTEDTPLLGPR. The Cytoplasmic portion of the chain corresponds to 1–42; it reads MRYDQEAGSSSHSLPSGSSSHSLPPTEDTPLLGPRTLSSQPK. The segment covering 8 to 24 has biased composition (low complexity); the sequence is GSSSHSLPSGSSSHSLP. A helical transmembrane segment spans residues 43-63; it reads TFANVFIAIVGAGVLGLPYTF. Over 64–69 the chain is Vacuolar; it reads KKTGWL. The helical transmembrane segment at 70–90 threads the bilayer; that stretch reads LGLLTLLFVSSLTFFCMMLLV. The Cytoplasmic segment spans residues 91 to 122; sequence HTRRKLESLSGFNSITSFGDLGESVCGPAGRL. A helical transmembrane segment spans residues 123-143; sequence VVDVMLVLSQSGFCVSYLIFV. Residues 144 to 157 lie on the Vacuolar side of the membrane; the sequence is ATTMANLLSRGTEH. Residues 158–178 form a helical membrane-spanning segment; that stretch reads ILGLDAASIYLWGCFPFQLGL. The Cytoplasmic portion of the chain corresponds to 179 to 186; sequence NSIPSLTH. Residues 187-207 traverse the membrane as a helical segment; sequence LAPLSIFADIVDVAATLVVMV. Over 208–227 the chain is Vacuolar; sequence QDVFIFLKRRPPLRVFGGVS. The helical transmembrane segment at 228 to 248 threads the bilayer; that stretch reads VFFYGLGVAVYAFEGIGMVLP. Residues 249–262 lie on the Cytoplasmic side of the membrane; it reads LELEAKYKDKFGRA. Residues 263 to 283 form a helical membrane-spanning segment; the sequence is LGLAMGLISIMYGAFGLLGYM. Topologically, residues 284-300 are vacuolar; the sequence is AYGEETKDIITTNLGTG. The chain crosses the membrane as a helical span at residues 301-321; sequence VVSTLVQLGLAINLFFTFPLM. The Cytoplasmic segment spans residues 322 to 339; that stretch reads MQPVYEVVERRLCSSRYS. Residues 340–360 traverse the membrane as a helical segment; it reads VWVRWATVLVVTLVALLVPNF. At 361 to 362 the chain is on the vacuolar side; it reads AD. A helical membrane pass occupies residues 363–383; sequence FLSLVGSSVCVVLGFVLPSLF. Over 384–396 the chain is Cytoplasmic; it reads HLQAFKNELSITR. The chain crosses the membrane as a helical span at residues 397–417; it reads IVVDVLVFLIGVMIAITGTWT. At 418–427 the chain is on the vacuolar side; it reads AVHEILTSKA.

It belongs to the amino acid/polyamine transporter 2 family. Amino acid/auxin permease (AAAP) (TC 2.A.18.8) subfamily. In terms of tissue distribution, ubiquitous.

The protein localises to the vacuole membrane. Functionally, translocates preferentially neutral amino acids and to a lesser extent aromatic amino acids from the vacuole to the cytoplasm. Requires ATP for function. The chain is Amino acid transporter AVT3A from Arabidopsis thaliana (Mouse-ear cress).